The primary structure comprises 207 residues: Large ribosomal subunit protein bL25 (207 aa).

The segment at 186-207 (SKPRGGAGAEGEADAEGEAAAE) is disordered. A compositionally biased stretch (acidic residues) spans 196–207 (GEADAEGEAAAE).

It belongs to the bacterial ribosomal protein bL25 family. CTC subfamily. Part of the 50S ribosomal subunit; part of the 5S rRNA/L5/L18/L25 subcomplex. Contacts the 5S rRNA. Binds to the 5S rRNA independently of L5 and L18.

In terms of biological role, this is one of the proteins that binds to the 5S RNA in the ribosome where it forms part of the central protuberance. This chain is Large ribosomal subunit protein bL25, found in Methylobacillus flagellatus (strain ATCC 51484 / DSM 6875 / VKM B-1610 / KT).